Here is a 350-residue protein sequence, read N- to C-terminus: Phenylalanine--tRNA ligase alpha subunit (350 aa).

A Mg(2+)-binding site is contributed by E257.

It belongs to the class-II aminoacyl-tRNA synthetase family. Phe-tRNA synthetase alpha subunit type 1 subfamily. In terms of assembly, tetramer of two alpha and two beta subunits. Mg(2+) serves as cofactor.

It is found in the cytoplasm. It carries out the reaction tRNA(Phe) + L-phenylalanine + ATP = L-phenylalanyl-tRNA(Phe) + AMP + diphosphate + H(+). This is Phenylalanine--tRNA ligase alpha subunit from Listeria monocytogenes serotype 4a (strain HCC23).